Here is a 291-residue protein sequence, read N- to C-terminus: T-cell leukemia homeobox protein 3 (291 aa).

Residues 1–56 (MEAPASAQTPHPHEPISFGIDQILNSPDQDSAPAPRGPDGASYLGGPPGGRPGATY) are disordered. Positions 166-225 (RKKPRTSFSRVQICELEKRFHRQKYLASAERAALAKSLKMTDAQVKTWFQNRRTKWRRQT) form a DNA-binding region, homeobox.

It localises to the nucleus. This is T-cell leukemia homeobox protein 3 (TLX3) from Homo sapiens (Human).